A 219-amino-acid polypeptide reads, in one-letter code: Histidinol-phosphate aminotransferase (219 aa).

Belongs to the class-II pyridoxal-phosphate-dependent aminotransferase family. Histidinol-phosphate aminotransferase subfamily. In terms of assembly, homodimer. It depends on pyridoxal 5'-phosphate as a cofactor.

It catalyses the reaction L-histidinol phosphate + 2-oxoglutarate = 3-(imidazol-4-yl)-2-oxopropyl phosphate + L-glutamate. Its pathway is amino-acid biosynthesis; L-histidine biosynthesis; L-histidine from 5-phospho-alpha-D-ribose 1-diphosphate: step 7/9. The sequence is that of Histidinol-phosphate aminotransferase (hisC) from Mycolicibacterium smegmatis (Mycobacterium smegmatis).